The following is a 511-amino-acid chain: ATP synthase subunit alpha (511 aa).

ATP is bound at residue 170–177; it reads GDRQTGKT.

This sequence belongs to the ATPase alpha/beta chains family. In terms of assembly, F-type ATPases have 2 components, CF(1) - the catalytic core - and CF(0) - the membrane proton channel. CF(1) has five subunits: alpha(3), beta(3), gamma(1), delta(1), epsilon(1). CF(0) has three main subunits: a(1), b(2) and c(9-12). The alpha and beta chains form an alternating ring which encloses part of the gamma chain. CF(1) is attached to CF(0) by a central stalk formed by the gamma and epsilon chains, while a peripheral stalk is formed by the delta and b chains.

It localises to the cell inner membrane. It catalyses the reaction ATP + H2O + 4 H(+)(in) = ADP + phosphate + 5 H(+)(out). Produces ATP from ADP in the presence of a proton gradient across the membrane. The alpha chain is a regulatory subunit. The chain is ATP synthase subunit alpha from Pelagibacter ubique (strain HTCC1062).